Here is a 241-residue protein sequence, read N- to C-terminus: Deoxyribose-phosphate aldolase (241 aa).

Asp-95 acts as the Proton donor/acceptor in catalysis. Residue Lys-159 is the Schiff-base intermediate with acetaldehyde of the active site. Lys-188 acts as the Proton donor/acceptor in catalysis.

It belongs to the DeoC/FbaB aldolase family. DeoC type 1 subfamily.

It localises to the cytoplasm. It catalyses the reaction 2-deoxy-D-ribose 5-phosphate = D-glyceraldehyde 3-phosphate + acetaldehyde. It participates in carbohydrate degradation; 2-deoxy-D-ribose 1-phosphate degradation; D-glyceraldehyde 3-phosphate and acetaldehyde from 2-deoxy-alpha-D-ribose 1-phosphate: step 2/2. Its function is as follows. Catalyzes a reversible aldol reaction between acetaldehyde and D-glyceraldehyde 3-phosphate to generate 2-deoxy-D-ribose 5-phosphate. The sequence is that of Deoxyribose-phosphate aldolase from Rhodopirellula baltica (strain DSM 10527 / NCIMB 13988 / SH1).